We begin with the raw amino-acid sequence, 271 residues long: Mannosyl-3-phosphoglycerate phosphatase (271 aa).

Aspartate 13 functions as the Nucleophile in the catalytic mechanism. Mg(2+) is bound by residues aspartate 13, aspartate 15, and aspartate 214.

This sequence belongs to the HAD-like hydrolase superfamily. MPGP family. Requires Mg(2+) as cofactor.

The protein resides in the cytoplasm. The enzyme catalyses 2-O-(alpha-D-mannosyl)-3-phosphoglycerate + H2O = (2R)-2-O-(alpha-D-mannosyl)-glycerate + phosphate. The polypeptide is Mannosyl-3-phosphoglycerate phosphatase (Escherichia coli (strain SE11)).